The following is a 578-amino-acid chain: Probable arginine--tRNA ligase, mitochondrial (578 aa).

Residues 1–16 (MACGFRRAIACQLSRV) constitute a mitochondrion transit peptide. L-arginine is bound by residues 133–135 (SPN), His-144, Tyr-322, Asp-326, and Gln-350. Residues 133-144 (SPNVAKKFHVGH) carry the 'HIGH' region motif. The residue at position 568 (Lys-568) is an N6-acetyllysine.

It belongs to the class-I aminoacyl-tRNA synthetase family.

Its subcellular location is the mitochondrion membrane. The catalysed reaction is tRNA(Arg) + L-arginine + ATP = L-arginyl-tRNA(Arg) + AMP + diphosphate. Functionally, catalyzes the attachment of arginine to tRNA(Arg) in a two-step reaction: arginine is first activated by ATP to form Arg-AMP and then transferred to the acceptor end of tRNA(Arg). This is Probable arginine--tRNA ligase, mitochondrial (RARS2) from Pongo abelii (Sumatran orangutan).